Consider the following 464-residue polypeptide: Argininosuccinate lyase (464 aa).

Belongs to the lyase 1 family. Argininosuccinate lyase subfamily.

Its subcellular location is the cytoplasm. The enzyme catalyses 2-(N(omega)-L-arginino)succinate = fumarate + L-arginine. Its pathway is amino-acid biosynthesis; L-arginine biosynthesis; L-arginine from L-ornithine and carbamoyl phosphate: step 3/3. The sequence is that of Argininosuccinate lyase from Chlorobium phaeobacteroides (strain DSM 266 / SMG 266 / 2430).